Consider the following 311-residue polypeptide: DNA repair and recombination protein RadA (311 aa).

Residue 104-111 (GEFGSGKS) participates in ATP binding.

The protein belongs to the eukaryotic RecA-like protein family.

Its function is as follows. Involved in DNA repair and in homologous recombination. Binds and assemble on single-stranded DNA to form a nucleoprotein filament. Hydrolyzes ATP in a ssDNA-dependent manner and promotes DNA strand exchange between homologous DNA molecules. The protein is DNA repair and recombination protein RadA of Methanosphaera stadtmanae (strain ATCC 43021 / DSM 3091 / JCM 11832 / MCB-3).